We begin with the raw amino-acid sequence, 197 residues long: dCTP deaminase (197 aa).

Position 105-110 (105-110 (RSSIAR)) interacts with dCTP. Glutamate 133 (proton donor/acceptor) is an active-site residue. DCTP is bound by residues tyrosine 166 and glutamine 177. Residues 172-197 (NKYAGQKDPKPSRLAEELSLEQLRGR) are disordered. Over residues 176 to 187 (GQKDPKPSRLAE) the composition is skewed to basic and acidic residues.

This sequence belongs to the dCTP deaminase family. Homotrimer.

It catalyses the reaction dCTP + H2O + H(+) = dUTP + NH4(+). It functions in the pathway pyrimidine metabolism; dUMP biosynthesis; dUMP from dCTP (dUTP route): step 1/2. Its function is as follows. Catalyzes the deamination of dCTP to dUTP. The sequence is that of dCTP deaminase from Thermomicrobium roseum (strain ATCC 27502 / DSM 5159 / P-2).